Consider the following 368-residue polypeptide: Ceramide synthase hyl-1 (368 aa).

The next 7 helical transmembrane spans lie at 27–47 (FVDLLVPIYLAIPLVIIRILW), 92–112 (ILECFWRFSYYTFAFLYGLYV), 138–158 (IWWYYMIETGFYYSLLIGSTF), 165–185 (FWQLMVHHVITIFLLSSSWTI), 191–211 (GTLILLSHDVSDVFLEGGKLV), 225–245 (FVLFFSSWVATRLIYYPFIVI), and 275–295 (LIVFALILLFFLHIFWTFIIL). The TLC domain maps to 90-303 (KKILECFWRF…ILRIAYRTST (214 aa)). The tract at residues 306–368 (QAKDVRSDSD…ARHRRAPRKE (63 aa)) is disordered. Residues 343–353 (TDDDDDEGEEE) are compositionally biased toward acidic residues. A compositionally biased stretch (basic residues) spans 357 to 368 (RKARHRRAPRKE).

Belongs to the sphingosine N-acyltransferase family.

It is found in the membrane. The catalysed reaction is a very long-chain fatty acyl-CoA + a sphingoid base = an N-(very-long-chain fatty acyl)-sphingoid base + CoA + H(+). It catalyses the reaction 15-methylhexadecasphinganine + a fatty acyl-CoA = an N-acyl-15-methylhexadecasphinganine + CoA + H(+). It carries out the reaction a fatty acyl-CoA + sphinganine = an N-acylsphinganine + CoA + H(+). The enzyme catalyses sphinganine + tetradecanoyl-CoA = N-(tetradecanoyl)-sphinganine + CoA + H(+). The catalysed reaction is hexacosanoyl-CoA + sphinganine = N-hexacosanoylsphinganine + CoA + H(+). It participates in lipid metabolism; sphingolipid metabolism. Functionally, catalyzes the acylation of sphingoid bases to form ceramides, which are key players in cell signaling events such as extending lifespan and enhancing stress resistance. C.elegans contain specific sphingoid bases, which are unique or different in structure compared to the sphingoid bases found in other animals. Two examples of these distinctive compounds are: 15-methylhexadecasphinganine and 15-methylhexadecasphing-4-enine. Exhibits substrate preference for fatty acyl-coA chains containing carbon chain length (C16-C18) and very long chains (24 carbons and more). This Caenorhabditis elegans protein is Ceramide synthase hyl-1 (hyl-1).